The sequence spans 935 residues: Ribonuclease E (935 aa).

In terms of domain architecture, S1 motif spans 39-119 (ANIYKGKITR…GNKGAALTTF (81 aa)). Residues aspartate 302 and aspartate 345 each contribute to the Mg(2+) site. Cysteine 403 and cysteine 406 together coordinate Zn(2+). The tract at residues 403–406 (CPRC) is required for zinc-mediated homotetramerization and catalytic activity. 2 disordered regions span residues 571–669 (TKSE…DLRK) and 698–743 (VQNN…KSPM). Composition is skewed to basic and acidic residues over residues 593 to 625 (RSQD…ERNQ) and 701 to 719 (NDEK…ERQR). Residues 720 to 734 (RTPRHLRAANNQRRR) are compositionally biased toward basic residues.

Belongs to the RNase E/G family. RNase E subfamily. In terms of assembly, component of the RNA degradosome, which is a multiprotein complex involved in RNA processing and mRNA degradation. Within the RNA degradosome, RNase E assembles into a homotetramer formed by a dimer of dimers. It depends on Zn(2+) as a cofactor. Mg(2+) is required as a cofactor.

The protein resides in the cytoplasm. Its subcellular location is the cell inner membrane. The enzyme catalyses Endonucleolytic cleavage of single-stranded RNA in A- and U-rich regions.. Its function is as follows. Endoribonuclease that plays a central role in RNA processing and decay. Required for the maturation of 5S and 16S rRNAs and the majority of tRNAs. Also involved in the degradation of most mRNAs. The chain is Ribonuclease E from Haemophilus influenzae (strain ATCC 51907 / DSM 11121 / KW20 / Rd).